A 152-amino-acid polypeptide reads, in one-letter code: Ribosomal RNA large subunit methyltransferase H (152 aa).

Residues Leu-65, Gly-96, and 115-120 (LGPMTW) contribute to the S-adenosyl-L-methionine site.

It belongs to the RNA methyltransferase RlmH family. Homodimer.

Its subcellular location is the cytoplasm. It catalyses the reaction pseudouridine(1915) in 23S rRNA + S-adenosyl-L-methionine = N(3)-methylpseudouridine(1915) in 23S rRNA + S-adenosyl-L-homocysteine + H(+). Functionally, specifically methylates the pseudouridine at position 1915 (m3Psi1915) in 23S rRNA. The polypeptide is Ribosomal RNA large subunit methyltransferase H (Gluconacetobacter diazotrophicus (strain ATCC 49037 / DSM 5601 / CCUG 37298 / CIP 103539 / LMG 7603 / PAl5)).